A 358-amino-acid chain; its full sequence is Magnesium-protoporphyrin IX monomethyl ester [oxidative] cyclase 3 (358 aa).

This sequence belongs to the AcsF family. Fe cation serves as cofactor.

It catalyses the reaction Mg-protoporphyrin IX 13-monomethyl ester + 3 NADPH + 3 O2 + 2 H(+) = 3,8-divinyl protochlorophyllide a + 3 NADP(+) + 5 H2O. The protein operates within porphyrin-containing compound metabolism; chlorophyll biosynthesis (light-independent). Catalyzes the formation of the isocyclic ring in chlorophyll biosynthesis. Mediates the cyclase reaction, which results in the formation of divinylprotochlorophyllide (Pchlide) characteristic of all chlorophylls from magnesium-protoporphyrin IX 13-monomethyl ester (MgPMME). In Nostoc sp. (strain PCC 7120 / SAG 25.82 / UTEX 2576), this protein is Magnesium-protoporphyrin IX monomethyl ester [oxidative] cyclase 3.